Consider the following 298-residue polypeptide: ATP synthase gamma chain (298 aa).

It belongs to the ATPase gamma chain family. In terms of assembly, F-type ATPases have 2 components, CF(1) - the catalytic core - and CF(0) - the membrane proton channel. CF(1) has five subunits: alpha(3), beta(3), gamma(1), delta(1), epsilon(1). CF(0) has three main subunits: a, b and c.

The protein localises to the cell inner membrane. Functionally, produces ATP from ADP in the presence of a proton gradient across the membrane. The gamma chain is believed to be important in regulating ATPase activity and the flow of protons through the CF(0) complex. The sequence is that of ATP synthase gamma chain from Francisella tularensis subsp. holarctica (strain FTNF002-00 / FTA).